We begin with the raw amino-acid sequence, 222 residues long: MRFSKSLILITLSALVISFAEANDPSPLQDFCVAIGDLKNGVFVNGKFCKDPKQAKAEDFFYSGLNQAGTTNNKVKSNVTTVNVDQIPGLNTLGISLVRIDYAPYGQNPPHTHPRATEILVLVEGTLYVGFVSSNQDNNRLFAKVLNPGDVFVFPIGMIHFQVNIGKTPAVAFAGLSSQNAGVITIADTVFGSTPPINPDILAQAFQLDVNVVKDLEAKFKN.

A signal peptide spans 1 to 22; the sequence is MRFSKSLILITLSALVISFAEA. C32 and C49 are oxidised to a cystine. Positions 63-214 constitute a Cupin type-1 domain; it reads SGLNQAGTTN…AFQLDVNVVK (152 aa). N78 carries N-linked (GlcNAc...) asparagine glycosylation. Positions 111, 113, 118, and 160 each coordinate Mn(2+).

It belongs to the germin family. In terms of assembly, oligomer (believed to be a pentamer but probably hexamer).

It localises to the secreted. The protein localises to the extracellular space. It is found in the apoplast. In terms of biological role, may play a role in plant defense. Probably has no oxalate oxidase activity even if the active site is conserved. This Arabidopsis thaliana (Mouse-ear cress) protein is Germin-like protein subfamily 1 member 14.